The primary structure comprises 571 residues: Proline--tRNA ligase (571 aa).

This sequence belongs to the class-II aminoacyl-tRNA synthetase family. ProS type 1 subfamily. As to quaternary structure, homodimer.

The protein localises to the cytoplasm. It carries out the reaction tRNA(Pro) + L-proline + ATP = L-prolyl-tRNA(Pro) + AMP + diphosphate. Catalyzes the attachment of proline to tRNA(Pro) in a two-step reaction: proline is first activated by ATP to form Pro-AMP and then transferred to the acceptor end of tRNA(Pro). As ProRS can inadvertently accommodate and process non-cognate amino acids such as alanine and cysteine, to avoid such errors it has two additional distinct editing activities against alanine. One activity is designated as 'pretransfer' editing and involves the tRNA(Pro)-independent hydrolysis of activated Ala-AMP. The other activity is designated 'posttransfer' editing and involves deacylation of mischarged Ala-tRNA(Pro). The misacylated Cys-tRNA(Pro) is not edited by ProRS. This chain is Proline--tRNA ligase, found in Pseudomonas syringae pv. tomato (strain ATCC BAA-871 / DC3000).